We begin with the raw amino-acid sequence, 271 residues long: Aquaporin-1 (271 aa).

The Cytoplasmic segment spans residues 1-11 (MASEFKKKIFW). Residues 12–29 (RAVVAEFLAMTLFIFISI) form a helical membrane-spanning segment. The Extracellular segment spans residues 30-48 (GSALGFQYPVRNNQTSGAA). N-linked (GlcNAc...) asparagine glycosylation is present at N42. The chain crosses the membrane as a helical span at residues 49 to 67 (QDNVKVSLAFGLSIATLAQ). Residues 68 to 70 (SVG) are Cytoplasmic-facing. Residues 71 to 84 (HISGAHLNPAVTLG) lie within the membrane without spanning it. The NPA 1 motif lies at 78–80 (NPA). Over 85-92 (LLLSCQIS) the chain is Cytoplasmic. Residues 93–111 (VLRAVMYIIAQCVGAIVAT) traverse the membrane as a helical segment. At 112–135 (AILSGITSSLPGNSLGLNSLAPGV) the chain is on the extracellular side. Residues 136–155 (DSGQGLGIEIIGTLQLVLCV) traverse the membrane as a helical segment. The Cytoplasmic portion of the chain corresponds to 156–165 (LATTDRRRRD). The chain crosses the membrane as a helical span at residues 166–183 (LGGSAPLAIGFSVALGHL). Topologically, residues 184–188 (LAIDY) are extracellular. Residues 189 to 201 (TGCGINPARSFGS) lie within the membrane without spanning it. The short motif at 194 to 196 (NPA) is the NPA 2 element. Topologically, residues 202 to 208 (AVITHNF) are extracellular. The helical transmembrane segment at 209-226 (QDHWVFWVGPFIGGALAV) threads the bilayer. Topologically, residues 227–271 (LIYDFILAPRSSDLTDRVKVWTSGQVEEYDLDGDDINSRVEMKPK) are cytoplasmic. S249 is modified (phosphoserine). At Y255 the chain carries Phosphotyrosine. S264 carries the phosphoserine modification.

Belongs to the MIP/aquaporin (TC 1.A.8) family. As to quaternary structure, homotetramer; each monomer provides an independent water pore. Component of the ankyrin-1 complex in the erythrocyte, composed of ANK1, RHCE, RHAG, SLC4A1, EPB42, GYPA, GYPB and AQP1. Interacts with EPHB2; involved in endolymph production in the inner ear. Identified in a complex with STOM. Interacts (via the N-terminal) with ANK1 (via ANK 1-5 repeats). Interacts (via the C-terminal) with EPB42.

Its subcellular location is the cell membrane. The catalysed reaction is H2O(in) = H2O(out). It catalyses the reaction nitric oxide(out) = nitric oxide(in). The enzyme catalyses CO2(out) = CO2(in). It carries out the reaction glycerol(in) = glycerol(out). The catalysed reaction is H2O2(out) = H2O2(in). It catalyses the reaction K(+)(in) = K(+)(out). The enzyme catalyses Na(+)(in) = Na(+)(out). Functionally, forms a water channel that facilitates the transport of water across cell membranes, playing a crucial role in water homeostasis in various tissues. Could also be permeable to small solutes including hydrogen peroxide, glycerol and gases such as amonnia (NH3), nitric oxide (NO) and carbon dioxide (CO2). Recruited to the ankyrin-1 complex, a multiprotein complex of the erythrocyte membrane, it could be part of a CO2 metabolon, linking facilitated diffusion of CO2 across the membrane, anion exchange of Cl(-)/HCO3(-) and interconversion of dissolved CO2 and carbonic acid in the cytosol. In vitro, it shows non-selective gated cation channel activity and may be permeable to cations like K(+) and Na(+) in vivo. The chain is Aquaporin-1 from Sus scrofa (Pig).